A 185-amino-acid chain; its full sequence is Anaphase-promoting complex subunit 10 (185 aa).

Thr-2 is modified (N-acetylthreonine). A DOC domain is found at 2–185 (TTPNKTPPGA…IDFMMYRSIR (184 aa)). Lys-169 is subject to N6-acetyllysine.

This sequence belongs to the APC10 family. As to quaternary structure, the mammalian APC/C is composed at least of 14 distinct subunits ANAPC1, ANAPC2, CDC27/APC3, ANAPC4, ANAPC5, CDC16/APC6, ANAPC7, CDC23/APC8, ANAPC10, ANAPC11, CDC26/APC12, ANAPC13, ANAPC15 and ANAPC16 that assemble into a complex of at least 19 chains with a combined molecular mass of around 1.2 MDa; APC/C interacts with FZR1 and FBXO5. The C-terminus of APC10 binds to CDC27/APC3. Interacts with PIWIL1; interaction only takes place when PIWIL1 binds piRNA. Interacts with FBXO43; the interaction is direct.

Its pathway is protein modification; protein ubiquitination. Its function is as follows. Component of the anaphase promoting complex/cyclosome (APC/C), a cell cycle-regulated E3 ubiquitin ligase that controls progression through mitosis and the G1 phase of the cell cycle. The APC/C complex acts by mediating ubiquitination and subsequent degradation of target proteins: it mainly mediates the formation of 'Lys-11'-linked polyubiquitin chains and, to a lower extent, the formation of 'Lys-48'- and 'Lys-63'-linked polyubiquitin chains. The APC/C complex catalyzes assembly of branched 'Lys-11'-/'Lys-48'-linked branched ubiquitin chains on target proteins. This is Anaphase-promoting complex subunit 10 (ANAPC10) from Homo sapiens (Human).